Here is a 347-residue protein sequence, read N- to C-terminus: S-adenosylmethionine:tRNA ribosyltransferase-isomerase (347 aa).

Belongs to the QueA family. Monomer.

It localises to the cytoplasm. The catalysed reaction is 7-aminomethyl-7-carbaguanosine(34) in tRNA + S-adenosyl-L-methionine = epoxyqueuosine(34) in tRNA + adenine + L-methionine + 2 H(+). It participates in tRNA modification; tRNA-queuosine biosynthesis. In terms of biological role, transfers and isomerizes the ribose moiety from AdoMet to the 7-aminomethyl group of 7-deazaguanine (preQ1-tRNA) to give epoxyqueuosine (oQ-tRNA). The protein is S-adenosylmethionine:tRNA ribosyltransferase-isomerase of Halalkalibacterium halodurans (strain ATCC BAA-125 / DSM 18197 / FERM 7344 / JCM 9153 / C-125) (Bacillus halodurans).